A 670-amino-acid polypeptide reads, in one-letter code: C6 finger domain transcription factor iacK (670 aa).

The tract at residues 1–84 (MNTSPDYAQP…GEPKQSGPTV (84 aa)) is disordered. The segment covering 44–54 (GPPPPPPPPPT) has biased composition (pro residues). Residues 55 to 74 (ATATAATAAATTTTAAPSAT) are compositionally biased toward low complexity. Residues 88 to 114 (CLACRSKHLKCDGGNPCARCQASESIC) constitute a DNA-binding region (zn(2)-C6 fungal-type). Residues 122–157 (GYKGPRRNGTQNPNKRHAAASDDGSPNSNGSNESCP) form a disordered region. The span at 142-155 (SDDGSPNSNGSNES) shows a compositional bias: low complexity.

It is found in the nucleus. In terms of biological role, transcription factor; part of the gene cluster that mediates the biosynthesis of iso-A82775C, a enylepoxycyclohexane and biosynthetic precursor of the chloropestolide anticancer natural products. In Pestalotiopsis fici (strain W106-1 / CGMCC3.15140), this protein is C6 finger domain transcription factor iacK.